A 137-amino-acid polypeptide reads, in one-letter code: Proline-rich protein 13 (137 aa).

2 disordered regions span residues 26-54 and 94-137; these read PPPL…PCRP and VGPG…SDSD. A compositionally biased stretch (basic residues) spans 103-124; the sequence is KTRKKMKKAHKKSHKHHKHGKH. The segment covering 125-137 has biased composition (low complexity); it reads SSSSSSSSSSDSD.

The protein resides in the nucleus. Functionally, negatively regulates TSP1 expression at the level of transcription. This down-regulation was shown to reduce taxane-induced apoptosis. This is Proline-rich protein 13 (Prr13) from Mus musculus (Mouse).